A 399-amino-acid chain; its full sequence is MWQLLAAACWMLLLGSMYGYDKKGNNANPEANMNISQIISYWGYPYEEYDVTTKDGYILGIYRIPHGRGCPGRTAPKPAVYLQHGLIASASNWICNLPNNSLAFLLADSGYDVWLGNSRGNTWSRKHLKLSPKSPEYWAFSLDEMAKYDLPATINFIIEKTGQKRLYYVGHSQGTTIAFIAFSTNPELAKKIKIFFALAPVVTVKYTQSPMKKLTTLSRRVVKVLFGDKMFHPHTLFDQFIATKVCNRKLFRRICSNFLFTLSGFDPQNLNMSRLDVYLSHNPAGTSVQNMLHWAQAVNSGQLQAFDWGNSDQNMMHFHQLTPPLYNITKMEVPTAIWNGGQDIVADPKDVENLLPQIANLIYYKLIPHYNHVDFYLGEDAPQEIYQDLIILMEEYLQN.

Residues 1–19 form the signal peptide; that stretch reads MWQLLAAACWMLLLGSMYG. The AB hydrolase-1 domain maps to 78–378; the sequence is PAVYLQHGLI…HYNHVDFYLG (301 aa). Ser-172 acts as the Nucleophile in catalysis. Cysteines 246 and 255 form a disulfide. Residues Asn-271 and Asn-327 are each glycosylated (N-linked (GlcNAc...) asparagine). Active-site charge relay system residues include Asp-343 and His-372.

It belongs to the AB hydrolase superfamily. Lipase family. Exclusively expressed in the epidermis within the granular keratinocytes.

It is found in the secreted. In terms of biological role, plays a highly specific role in the last step of keratinocyte differentiation. May have an essential function in lipid metabolism of the most differentiated epidermal layers. The sequence is that of Lipase member K (LIPK) from Homo sapiens (Human).